The chain runs to 332 residues: rRNA biogenesis protein rrp-36 (332 aa).

4 disordered regions span residues 1-91 (MPAV…ASQL), 104-196 (GALK…SGKS), 243-262 (SMES…ELLS), and 312-332 (KKIA…AEDR). Acidic residues-rich tracts occupy residues 27–45 (EPDS…EEEG), 53–77 (DTEE…DSDA), and 117–127 (EDGSDDDEEKE). 2 stretches are compositionally biased toward basic and acidic residues: residues 128-142 (EPNW…MKAK) and 165-183 (RRRD…RDPR). Residues 212–274 (DYQEDEMKQL…KKKEKELIKQ (63 aa)) are a coiled coil. Over residues 315–332 (AGKEKKALPLARRTAEDR) the composition is skewed to basic and acidic residues.

The protein belongs to the RRP36 family. As to quaternary structure, associates with 90S and pre-40S pre-ribosomal particles.

The protein localises to the nucleus. Its subcellular location is the nucleolus. In terms of biological role, component of the 90S pre-ribosome involved in the maturation of rRNAs. Required for early cleavages of the pre-RNAs in the 40S ribosomal subunit maturation pathway. The sequence is that of rRNA biogenesis protein rrp-36 (rrp-36) from Neurospora crassa (strain ATCC 24698 / 74-OR23-1A / CBS 708.71 / DSM 1257 / FGSC 987).